We begin with the raw amino-acid sequence, 352 residues long: MKAIIVHPPGAGVSIEDVNINGNGPGIKILENGICGTDREIVNGELSAATSLNGFLVLGHEALGILEEDTKNLRKGDLVMPINRRGCGRCLNCMLGRPDFCETGEQLEAGISGMHGFMREYINDDERYLVKVPDVIRDIAIMAQPLADLEKSIEEMISIQKRLHWPCIDGTYNCRKVLITGTGTIGILFAMLLKTYGFSVYISNKREPNDIESKIFDELSVKYKNLSNKIDESFDAIIEASGSGTDVIERTLPLLKNNGFYGIFGFEKTGTLNLTSEFLQGIVYKSINITGLINGQKPHMEMAMNHLIQWKKQFPKTTSMMITEKVSINNERRLKEVLSKKRPGEIKIKIIW.

Cys35 serves as a coordination point for Zn(2+). Position 37 (Thr37) interacts with substrate. 2 residues coordinate Zn(2+): His60 and Glu61. Asn83 is a substrate binding site. Zn(2+)-binding residues include Cys87, Cys90, Cys93, and Cys101. Residues Glu108, Gln144, and Asp148 each coordinate substrate. Residue Gln144 coordinates Zn(2+). NADP(+)-binding positions include 182-185, 204-206, 264-266, 292-294, and Lys341; these read TGTI, NKR, FGF, and LIN. Asn294 provides a ligand contact to substrate.

Belongs to the zinc-containing alcohol dehydrogenase family. Glucose 1-dehydrogenase subfamily. Zn(2+) is required as a cofactor.

The catalysed reaction is D-glucose + NAD(+) = D-glucono-1,5-lactone + NADH + H(+). It carries out the reaction D-glucose + NADP(+) = D-glucono-1,5-lactone + NADPH + H(+). Its function is as follows. Catalyzes the NAD(P)(+)-dependent oxidation of D-glucose to D-gluconate via gluconolactone. Can utilize both NAD(+) and NADP(+) as electron acceptor. Is involved in the degradation of glucose through a non-phosphorylative variant of the Entner-Doudoroff pathway. The chain is Glucose 1-dehydrogenase 1 from Picrophilus torridus (strain ATCC 700027 / DSM 9790 / JCM 10055 / NBRC 100828 / KAW 2/3).